We begin with the raw amino-acid sequence, 203 residues long: Somatotropin (203 aa).

Positions 1–17 (MDRVVLMLSVLSLGVSS) are cleaved as a signal peptide. Gln18 carries the post-translational modification Pyrrolidone carboxylic acid. His36 is a Zn(2+) binding site. A disulfide bond links Cys68 and Cys176. Glu185 serves as a coordination point for Zn(2+). Cys193 and Cys201 are disulfide-bonded.

Belongs to the somatotropin/prolactin family.

The protein localises to the secreted. Functionally, growth hormone plays an important role in growth control and is involved in the regulation of several anabolic processes. Implicated as an osmoregulatory substance important for seawater adaptation. In Pagrus major (Red sea bream), this protein is Somatotropin (gh).